The following is a 151-amino-acid chain: Natriuretic peptides A (151 aa).

A signal peptide spans 1 to 25 (MSSFSTTTVSFLLLLAFQLLGQTRA). The disordered stretch occupies residues 62–105 (VLSEPNEEAGAALSPLPEVPPWTGEVSPAQRDGGALGRGPWDSS). Residues 93–103 (DGGALGRGPWD) constitute a propeptide that is removed on maturation. Ser129 is subject to Phosphoserine. Cys130 and Cys146 are oxidised to a cystine. Residues 147–151 (NSFRY) form an important for degradation of atrial natriuretic peptide by IDE region.

Belongs to the natriuretic peptide family. Homodimer; disulfide-linked antiparallel dimer. In terms of processing, the precursor molecule is proteolytically cleaved by CORIN at Arg-123 to produce atrial natriuretic peptide. Undergoes further proteolytic cleavage by unknown proteases to give rise to long-acting natriuretic peptide, vessel dilator and kaliuretic peptide. Additional processing gives rise to the auriculin and atriopeptin peptides. In the kidneys, alternative processing by an unknown protease results in the peptide urodilatin. Cleavage by MME initiates degradation of the factor and thereby regulates its activity. Degraded by IDE (in vitro). During IDE degradation, the resulting products can temporarily stimulate NPR2 to produce cGMP, before the fragments are completely degraded and inactivated by IDE (in vitro). Post-translationally, degraded by IDE. In terms of processing, phosphorylation on Ser-129 decreases vasorelaxant activity. In terms of tissue distribution, detected in the kidney distal tubular cells (at protein level). Present in urine (at protein level). As to expression, detected in atrial and ventricular plasma samples, and in adipocytes (at protein level). Detected in urine in one study. However, was not detected in urine in another study. In the brain, predominantly expressed in the gray matter with very weak expression in the white matter (at protein level). Localizes to astrocyte-like structures throughout the white matter, and in the cerebral vessels detected in the leptomeningeal and parenchymal vessels, and endothelium and smooth muscle layers (at protein level). Relatively low levels of expression in the kidneys compared to urodilatin (at protein level).

The protein resides in the secreted. The protein localises to the perikaryon. It localises to the cell projection. Its function is as follows. Hormone that plays a key role in mediating cardio-renal homeostasis, and is involved in vascular remodeling and regulating energy metabolism. Acts by specifically binding and stimulating NPR1 to produce cGMP, which in turn activates effector proteins, such as PRKG1, that drive various biological responses. Regulates vasodilation, natriuresis, diuresis and aldosterone synthesis and is therefore essential for regulating blood pressure, controlling the extracellular fluid volume and maintaining the fluid-electrolyte balance. Also involved in inhibiting cardiac remodeling and cardiac hypertrophy by inducing cardiomyocyte apoptosis and attenuating the growth of cardiomyocytes and fibroblasts. Plays a role in female pregnancy by promoting trophoblast invasion and spiral artery remodeling in uterus, and thus prevents pregnancy-induced hypertension. In adipose tissue, acts in various cGMP- and PKG-dependent pathways to regulate lipid metabolism and energy homeostasis. This includes up-regulating lipid metabolism and mitochondrial oxygen utilization by activating the AMP-activated protein kinase (AMPK), and increasing energy expenditure by acting via MAPK11 to promote the UCP1-dependent thermogenesis of brown adipose tissue. Binds the clearance receptor NPR3 which removes the hormone from circulation. May have a role in cardio-renal homeostasis through regulation of natriuresis, diuresis, vasodilation, and inhibiting aldosterone synthesis. In vitro, promotes the production of cGMP and induces vasodilation. May promote natriuresis, at least in part, by enhancing prostaglandin E2 synthesis resulting in the inhibition of renal Na+-K+-ATPase. However reports on the involvement of this peptide in mammal blood volume and blood pressure homeostasis are conflicting; according to a report, in vivo it is not sufficient to activate cGMP and does not inhibit collecting duct transport nor effect diuresis and natriuresis. Appears to bind to specific receptors that are distinct from the receptors bound by atrial natriuretic peptide and vessel dilator. Possibly enhances protein excretion in urine by decreasing proximal tubular protein reabsorption. Functionally, may have a role in cardio-renal homeostasis through regulation of natriuresis, diuresis, and vasodilation. In vitro, promotes the production of cGMP and induces vasodilation. May promote natriuresis, at least in part, by enhancing prostaglandin E2 synthesis resulting in the inhibition of renal Na+-K+-ATPase. However reports on the involvement of this peptide in mammal blood volume and blood pressure homeostasis are conflicting; according to a report it is not sufficient to activate cGMP and does not inhibit collecting duct transport nor effect diuresis and natriuresis. Appears to bind to specific receptors that are distinct from the receptors bound by the atrial natriuretic and long-acting natriuretic peptides. Possibly functions in protein excretion in urine by maintaining the integrity of the proximal tubules and enhancing protein excretion by decreasing proximal tubular protein reabsorption. In terms of biological role, may have a role in cardio-renal homeostasis through regulation of diuresis and inhibiting aldosterone synthesis. In vitro, promotes the production of cGMP and induces vasodilation. May promote natriuresis, at least in part, by enhancing prostaglandin E2 synthesis resulting in the inhibition of renal Na+-K+-ATPase. May have a role in potassium excretion but not sodium excretion (natriuresis). Possibly enhances protein excretion in urine by decreasing proximal tubular protein reabsorption. Its function is as follows. Hormone produced in the kidneys that appears to be important for maintaining cardio-renal homeostasis. Mediates vasodilation, natriuresis and diuresis primarily in the renal system, in order to maintain the extracellular fluid volume and control the fluid-electrolyte balance. Specifically binds and stimulates cGMP production by renal transmembrane receptors, likely NPR1. Urodilatin not ANP, may be the natriuretic peptide responsible for the regulation of sodium and water homeostasis in the kidney. May have a role in cardio-renal homeostasis through regulation of natriuresis and vasodilation. In vivo promotes natriuresis and in vitro, vasodilates renal artery strips. Functionally, may have a role in cardio-renal homeostasis through regulation of regulation of natriuresis and vasodilation. In vivo promotes natriuresis. In vitro, vasodilates intestinal smooth muscle but not smooth muscle strips. In terms of biological role, may have a role in cardio-renal homeostasis through regulation of natriuresis and vasodilation. In vivo promotes natriuresis. In vitro, selectively vasodilates intestinal and vascular smooth muscle strips. Its function is as follows. May have a role in cardio-renal homeostasis through regulation of natriuresis and vasodilation. In vivo promotes natriuresis. In vitro, selectively vasodilates intestinal smooth muscle but not vascular smooth muscle strips. The protein is Natriuretic peptides A (NPPA) of Homo sapiens (Human).